The chain runs to 717 residues: MLLNPDQILNLVRKVYEVDIKQFYSQLRLKNLRGLLDHAAHLFNVYLRDLEINQEMEALTAFIIGCYYLYLIIPQSLQFQTRNNLYSSYAKLKNDYQDEHVMGYVLKVVRDESTVIVDRYLAESNGICRTIKRKRAYSLPLRPLPVHMASLSIHNKFDGSLHEIPNELTKPTNDNSKEDIVRESNQIASSNKLEAGSEVAYYTSKEALSKPSYLKLSTGKDALFKTLSSPATAPPVHSLEVSSQIRDSSQDSSSSLSKVEKPKEEEGKIEAIESSAPKAYNLPVIEDSNDLLSELSITGLQNPCNTCYINSIIQCLFGTTLFRDLFLTKKYRLFLNTNKYPKEVQLSRSIYVLFKKMYLNGGRAIIPNRFLKMCKKLRPDLNIPDDQQDTQEFLLIVLARIHEELSNENVVKYYPDLVSYDANALQVNPSKYEKWYERNVITDGLSPIDHIYRGQLENILKCQRCGNSSYSYSTFYVLSLAIPKLSLYSFTSKSRKIKLEDCINLFTGDEELSGDNAWDCPNCRITDSKSKKEEITSQKKKSTIFGFHSRSRSKSPHHHHHHHHSSDDSTKNAKKRNSKKLTTIKSLDFIVLPPILVIHLSRFYYDLTKKNSTVITYPLILNIILKNGKVIRYKLYGTVNHSGNLINGHYTSVVNKEKSHEIGLNRQVWVTFDDDYIQQHRKDRNNFEAGKTEMSSDEVYVLFYERMDEENYEEEFC.

A disordered region spans residues 231-268 (ATAPPVHSLEVSSQIRDSSQDSSSSLSKVEKPKEEEGK). Low complexity predominate over residues 242 to 257 (SSQIRDSSQDSSSSLS). Basic and acidic residues predominate over residues 258-268 (KVEKPKEEEGK). A USP domain is found at 298–707 (TGLQNPCNTC…EVYVLFYERM (410 aa)). Residue C307 is the Nucleophile of the active site. The tract at residues 531–577 (KKEEITSQKKKSTIFGFHSRSRSKSPHHHHHHHHSSDDSTKNAKKRN) is disordered. Residues 549–564 (SRSRSKSPHHHHHHHH) show a composition bias toward basic residues. Catalysis depends on H649, which acts as the Proton acceptor.

It belongs to the peptidase C19 family.

The catalysed reaction is Thiol-dependent hydrolysis of ester, thioester, amide, peptide and isopeptide bonds formed by the C-terminal Gly of ubiquitin (a 76-residue protein attached to proteins as an intracellular targeting signal).. The chain is Ubiquitin carboxyl-terminal hydrolase 11 (UBP11) from Saccharomyces cerevisiae (strain ATCC 204508 / S288c) (Baker's yeast).